The following is a 389-amino-acid chain: Chalcone synthase 2 (389 aa).

Residue Cys-164 is part of the active site.

The protein belongs to the thiolase-like superfamily. Chalcone/stilbene synthases family.

It catalyses the reaction (E)-4-coumaroyl-CoA + 3 malonyl-CoA + 3 H(+) = 2',4,4',6'-tetrahydroxychalcone + 3 CO2 + 4 CoA. It functions in the pathway secondary metabolite biosynthesis; flavonoid biosynthesis. The primary product of this enzyme is 4,2',4',6'-tetrahydroxychalcone (also termed naringenin-chalcone or chalcone) which can under specific conditions spontaneously isomerize into naringenin. In Solanum lycopersicum (Tomato), this protein is Chalcone synthase 2 (CHS2).